The primary structure comprises 55 residues: Large ribosomal subunit protein bL33 (55 aa).

It belongs to the bacterial ribosomal protein bL33 family.

This is Large ribosomal subunit protein bL33 from Hamiltonella defensa subsp. Acyrthosiphon pisum (strain 5AT).